The sequence spans 469 residues: 3-isopropylmalate dehydratase large subunit 2 (469 aa).

[4Fe-4S] cluster is bound by residues cysteine 347, cysteine 408, and cysteine 411.

This sequence belongs to the aconitase/IPM isomerase family. LeuC type 1 subfamily. In terms of assembly, heterodimer of LeuC and LeuD. [4Fe-4S] cluster is required as a cofactor.

The enzyme catalyses (2R,3S)-3-isopropylmalate = (2S)-2-isopropylmalate. It participates in amino-acid biosynthesis; L-leucine biosynthesis; L-leucine from 3-methyl-2-oxobutanoate: step 2/4. In terms of biological role, catalyzes the isomerization between 2-isopropylmalate and 3-isopropylmalate, via the formation of 2-isopropylmaleate. The chain is 3-isopropylmalate dehydratase large subunit 2 from Mannheimia succiniciproducens (strain KCTC 0769BP / MBEL55E).